A 342-amino-acid chain; its full sequence is Putative TPR repeat-containing protein R856 (342 aa).

TPR repeat units lie at residues 36–69 (VHIF…IFNG), 77–110 (FYSV…IKDM), 119–152 (VYAL…NEKL), 161–194 (AFVL…YREK), 203–236 (AFTI…FNKI), 245–278 (AFSL…YKNV), and 291–324 (ASCL…FEST).

This is Putative TPR repeat-containing protein R856 from Acanthamoeba polyphaga mimivirus (APMV).